The following is a 382-amino-acid chain: Succinate--CoA ligase [ADP-forming] subunit beta 1 (382 aa).

The ATP-grasp domain maps to 9–235 (KQIFAKHGIR…ATEEDPLERE (227 aa)). ATP contacts are provided by residues lysine 45, 52-54 (GRG), glutamate 91, leucine 94, and glutamate 99. Asparagine 191 and aspartate 204 together coordinate Mg(2+). Asparagine 255 is a binding site for substrate.

It belongs to the succinate/malate CoA ligase beta subunit family. As to quaternary structure, heterotetramer of two alpha and two beta subunits. The cofactor is Mg(2+).

The catalysed reaction is succinate + ATP + CoA = succinyl-CoA + ADP + phosphate. The enzyme catalyses GTP + succinate + CoA = succinyl-CoA + GDP + phosphate. It participates in carbohydrate metabolism; tricarboxylic acid cycle; succinate from succinyl-CoA (ligase route): step 1/1. Functionally, succinyl-CoA synthetase functions in the citric acid cycle (TCA), coupling the hydrolysis of succinyl-CoA to the synthesis of either ATP or GTP and thus represents the only step of substrate-level phosphorylation in the TCA. The beta subunit provides nucleotide specificity of the enzyme and binds the substrate succinate, while the binding sites for coenzyme A and phosphate are found in the alpha subunit. The chain is Succinate--CoA ligase [ADP-forming] subunit beta 1 from Archaeoglobus fulgidus (strain ATCC 49558 / DSM 4304 / JCM 9628 / NBRC 100126 / VC-16).